Reading from the N-terminus, the 239-residue chain is tRNA (guanine-N(1)-)-methyltransferase (239 aa).

S-adenosyl-L-methionine contacts are provided by residues Gly-115 and 134–139 (MGDFVL). The interval 210–239 (QQQREQRTQERRPDLWNRWQQIQNPTPPAP) is disordered. Residues 211-224 (QQREQRTQERRPDL) are compositionally biased toward basic and acidic residues.

Belongs to the RNA methyltransferase TrmD family. In terms of assembly, homodimer.

It is found in the cytoplasm. The catalysed reaction is guanosine(37) in tRNA + S-adenosyl-L-methionine = N(1)-methylguanosine(37) in tRNA + S-adenosyl-L-homocysteine + H(+). Its function is as follows. Specifically methylates guanosine-37 in various tRNAs. In Synechococcus sp. (strain CC9311), this protein is tRNA (guanine-N(1)-)-methyltransferase.